The sequence spans 378 residues: uncharacterized protein (378 aa).

This sequence belongs to the IIV-6 329R family.

This is an uncharacterized protein from Acheta domesticus (House cricket).